Here is a 479-residue protein sequence, read N- to C-terminus: Adenosylhomocysteinase (479 aa).

The substrate site is built by Thr66, Asp142, and Glu203. 204–206 (TTT) provides a ligand contact to NAD(+). Residues Lys233 and Asp237 each contribute to the substrate site. NAD(+) is bound by residues Asn238, 267–272 (GYGDVG), Glu290, Asn325, 346–348 (IGH), and Asn394.

This sequence belongs to the adenosylhomocysteinase family. Requires NAD(+) as cofactor.

The protein resides in the cytoplasm. The enzyme catalyses S-adenosyl-L-homocysteine + H2O = L-homocysteine + adenosine. It participates in amino-acid biosynthesis; L-homocysteine biosynthesis; L-homocysteine from S-adenosyl-L-homocysteine: step 1/1. Its function is as follows. May play a key role in the regulation of the intracellular concentration of adenosylhomocysteine. The polypeptide is Adenosylhomocysteinase (Oleidesulfovibrio alaskensis (strain ATCC BAA-1058 / DSM 17464 / G20) (Desulfovibrio alaskensis)).